Consider the following 348-residue polypeptide: Phenylalanine--tRNA ligase alpha subunit (348 aa).

Position 259 (E259) interacts with Mg(2+).

It belongs to the class-II aminoacyl-tRNA synthetase family. Phe-tRNA synthetase alpha subunit type 1 subfamily. As to quaternary structure, tetramer of two alpha and two beta subunits. Mg(2+) serves as cofactor.

The protein localises to the cytoplasm. It carries out the reaction tRNA(Phe) + L-phenylalanine + ATP = L-phenylalanyl-tRNA(Phe) + AMP + diphosphate + H(+). In Limosilactobacillus reuteri (strain DSM 20016) (Lactobacillus reuteri), this protein is Phenylalanine--tRNA ligase alpha subunit.